Reading from the N-terminus, the 372-residue chain is Cytochrome b (372 aa).

Helical transmembrane passes span 25–45, 69–90, 105–125, and 170–190; these read FGSMLLTCLALQTLTGFFLAI, WIMQNMHAIGASMFFICIYTHI, WLSGTALLIVLMATAFFGYVL, and FFALHFILPFLIISLSSIHIM. Residues histidine 75 and histidine 89 each contribute to the heme b site. Heme b is bound by residues histidine 174 and histidine 188. A ubiquinone is bound at residue histidine 193. 4 consecutive transmembrane segments (helical) span residues 218–238, 280–300, 312–332, and 339–358; these read YKDMFIITTMIATLFIIMSFM, LGGTMALLMSVLILTTMPFTH, ITQVVFWTFIATFITITWTAT, and FILISQMASSMYFLFFIIHP.

Belongs to the cytochrome b family. In terms of assembly, the cytochrome bc1 complex contains 3 respiratory subunits (MT-CYB, CYC1 and UQCRFS1), 2 core proteins (UQCRC1 and UQCRC2) and probably 6 low-molecular weight proteins. It depends on heme b as a cofactor.

The protein localises to the mitochondrion inner membrane. Functionally, component of the ubiquinol-cytochrome c reductase complex (complex III or cytochrome b-c1 complex) that is part of the mitochondrial respiratory chain. The b-c1 complex mediates electron transfer from ubiquinol to cytochrome c. Contributes to the generation of a proton gradient across the mitochondrial membrane that is then used for ATP synthesis. This chain is Cytochrome b (MT-CYB), found in Pseudechis australis (Mulga snake).